Consider the following 429-residue polypeptide: 3-phosphoshikimate 1-carboxyvinyltransferase (429 aa).

3-phosphoshikimate-binding residues include Lys-22, Ser-23, and Arg-27. Lys-22 contributes to the phosphoenolpyruvate binding site. Phosphoenolpyruvate is bound by residues Gly-94 and Arg-122. Ser-167, Gln-169, Asp-315, and Lys-342 together coordinate 3-phosphoshikimate. Residue Gln-169 coordinates phosphoenolpyruvate. Residue Asp-315 is the Proton acceptor of the active site. Phosphoenolpyruvate contacts are provided by Arg-346 and Arg-388.

It belongs to the EPSP synthase family. Monomer.

It is found in the cytoplasm. It carries out the reaction 3-phosphoshikimate + phosphoenolpyruvate = 5-O-(1-carboxyvinyl)-3-phosphoshikimate + phosphate. The protein operates within metabolic intermediate biosynthesis; chorismate biosynthesis; chorismate from D-erythrose 4-phosphate and phosphoenolpyruvate: step 6/7. Its function is as follows. Catalyzes the transfer of the enolpyruvyl moiety of phosphoenolpyruvate (PEP) to the 5-hydroxyl of shikimate-3-phosphate (S3P) to produce enolpyruvyl shikimate-3-phosphate and inorganic phosphate. This Geotalea daltonii (strain DSM 22248 / JCM 15807 / FRC-32) (Geobacter daltonii) protein is 3-phosphoshikimate 1-carboxyvinyltransferase.